Consider the following 192-residue polypeptide: Peptidyl-tRNA hydrolase (192 aa).

Tyrosine 14 lines the tRNA pocket. The Proton acceptor role is filled by histidine 19. TRNA contacts are provided by tyrosine 61, asparagine 63, and asparagine 107.

It belongs to the PTH family. Monomer.

Its subcellular location is the cytoplasm. It carries out the reaction an N-acyl-L-alpha-aminoacyl-tRNA + H2O = an N-acyl-L-amino acid + a tRNA + H(+). Functionally, hydrolyzes ribosome-free peptidyl-tRNAs (with 1 or more amino acids incorporated), which drop off the ribosome during protein synthesis, or as a result of ribosome stalling. Its function is as follows. Catalyzes the release of premature peptidyl moieties from peptidyl-tRNA molecules trapped in stalled 50S ribosomal subunits, and thus maintains levels of free tRNAs and 50S ribosomes. The sequence is that of Peptidyl-tRNA hydrolase from Wolinella succinogenes (strain ATCC 29543 / DSM 1740 / CCUG 13145 / JCM 31913 / LMG 7466 / NCTC 11488 / FDC 602W) (Vibrio succinogenes).